The chain runs to 886 residues: Linoleate 9S-lipoxygenase 5 (886 aa).

The region spanning 35 to 180 (IEGEVVVMKK…RYRSDRVFFS (146 aa)) is the PLAT domain. A Lipoxygenase domain is found at 183–886 (AYLPSETPEL…GKGIPNSVSI (704 aa)). Residues 234–266 (GPDSVRPVLGGSPELPYPRRGKTGRKSTKSDPK) form a disordered region. Fe cation contacts are provided by His-542, His-547, His-733, Asn-737, and Ile-886.

The protein belongs to the lipoxygenase family. Fe cation serves as cofactor. As to expression, expressed in roots.

It carries out the reaction (9Z,12Z)-octadecadienoate + O2 = (9S)-hydroperoxy-(10E,12Z)-octadecadienoate. The catalysed reaction is (9Z,12Z,15Z)-octadecatrienoate + O2 = (9S)-hydroperoxy-(10E,12Z,15Z)-octadecatrienoate. Its pathway is lipid metabolism; oxylipin biosynthesis. In terms of biological role, 9S-lipoxygenase that can use linoleic acid or linolenic acid as substrates. Plant lipoxygenases may be involved in a number of diverse aspects of plant physiology including growth and development, pest resistance, and senescence or responses to wounding. Catalyzes the hydroperoxidation of lipids containing a cis,cis-1,4-pentadiene structure. Function as regulators of root development by controlling the emergence of lateral roots. 9S-lypoxygenase-derived oxylipins may play an antagonistic role to ethylene signaling in the control of responses involving oxidative stress, lipid peroxidation and plant defense. LOX5-derived oxylipins may facilitate performance of green peach aphid (Myzus persicae) on foliage. 9S-lypoxygenase-derived oxylipins are engaged during infection to control the balance between salicylic acid (SA) and jasmonate (JA) signaling to facilitate infection by the fungal pathogen Fusarium graminearum. 9S-lypoxygenase-derived oxylipins activate brassinosteroid signaling to promote cell wall-based defense and limit pathogen infection. Does not seem to contribute to the oxidation of free fatty acids during seed aging. This chain is Linoleate 9S-lipoxygenase 5, found in Arabidopsis thaliana (Mouse-ear cress).